Consider the following 234-residue polypeptide: Glucosamine-6-phosphate deaminase (234 aa).

Catalysis depends on Asp-62, which acts as the Proton acceptor; for enolization step. The For ring-opening step role is filled by Asn-128. His-130 functions as the Proton acceptor; for ring-opening step in the catalytic mechanism. Catalysis depends on Glu-135, which acts as the For ring-opening step.

Belongs to the glucosamine/galactosamine-6-phosphate isomerase family. NagB subfamily.

The catalysed reaction is alpha-D-glucosamine 6-phosphate + H2O = beta-D-fructose 6-phosphate + NH4(+). Its pathway is amino-sugar metabolism; N-acetylneuraminate degradation; D-fructose 6-phosphate from N-acetylneuraminate: step 5/5. Functionally, catalyzes the reversible isomerization-deamination of glucosamine 6-phosphate (GlcN6P) to form fructose 6-phosphate (Fru6P) and ammonium ion. The protein is Glucosamine-6-phosphate deaminase of Streptococcus uberis (strain ATCC BAA-854 / 0140J).